The following is a 725-amino-acid chain: ATP-dependent DNA helicase II subunit 2 (725 aa).

In terms of domain architecture, Ku spans 232–478; that stretch reads LTLGDPQKYP…QQAMSDYVDA (247 aa).

This sequence belongs to the ku80 family. Heterodimer of mus-51/ku70 and mus-52/ku80.

It localises to the nucleus. The protein resides in the chromosome. It is found in the telomere. It catalyses the reaction ATP + H2O = ADP + phosphate + H(+). Functionally, single-stranded DNA-dependent ATP-dependent helicase. Involved in non-homologous end joining (NHEJ) DNA double strand break repair. DNA-binding is sequence-independent but has a high affinity to nicks in double-stranded DNA and to the ends of duplex DNA. Binds to naturally occurring chromosomal ends, and therefore provides chromosomal end protection. Required also for telomere recombination to repair telomeric ends in the absence of telomerase. ku70, of the ku70/ku80 heterodimer, binds to the stem loop of tlc1, the RNA component of telomerase. Involved in telomere maintenance. Interacts with telomeric repeats and subtelomeric sequences thereby controlling telomere length and protecting against subtelomeric rearrangement. Maintains telomeric chromatin, which is involved in silencing the expression of genes located at the telomere. Required for mating-type switching. This chain is ATP-dependent DNA helicase II subunit 2 (mus-52), found in Neurospora crassa (strain ATCC 24698 / 74-OR23-1A / CBS 708.71 / DSM 1257 / FGSC 987).